The primary structure comprises 391 residues: Putative penicillin-binding protein PbpX (391 aa).

Residues 21–40 form a helical membrane-spanning segment; it reads GKLLFGLLAVMVCITIWNAL. The segment at 44–76 is disordered; the sequence is SEENEPSQETAAVSNTDQKKEVKKKTAKKSEEQ. Over residues 50-59 the composition is skewed to polar residues; sequence SQETAAVSNT.

This sequence belongs to the beta-lactamase family.

It is found in the cell membrane. The sequence is that of Putative penicillin-binding protein PbpX (pbpX) from Bacillus subtilis (strain 168).